Here is a 460-residue protein sequence, read N- to C-terminus: Trigger factor (460 aa).

Residues 166–245 (DDFLTIDITA…VKAVKERELP (80 aa)) form the PPIase FKBP-type domain. Residues 434-460 (AAEEAAAGEANEEADVVASDDPAAVKF) form a disordered region. Residues 449–460 (VVASDDPAAVKF) show a composition bias toward low complexity.

The protein belongs to the FKBP-type PPIase family. Tig subfamily.

Its subcellular location is the cytoplasm. It carries out the reaction [protein]-peptidylproline (omega=180) = [protein]-peptidylproline (omega=0). Involved in protein export. Acts as a chaperone by maintaining the newly synthesized protein in an open conformation. Functions as a peptidyl-prolyl cis-trans isomerase. This is Trigger factor from Paenarthrobacter aurescens (strain TC1).